The primary structure comprises 157 residues: RxLR effector protein PITG_04049 (157 aa).

The first 23 residues, 1–23 (MRLIAGVLAGFLVICEVTSTSES), serve as a signal peptide directing secretion. The short motif at 51-65 (QFLRTDVVMNRGEER) is the RxLR-dEER element.

This sequence belongs to the RxLR effector family.

It is found in the secreted. The protein resides in the host cytoplasm. The protein localises to the host nucleus. Effector that might be involved in host plant infection. The protein is RxLR effector protein PITG_04049 of Phytophthora infestans (strain T30-4) (Potato late blight agent).